The chain runs to 693 residues: TBC1 domain family member 14 (693 aa).

Serine 91 carries the post-translational modification Phosphoserine. 2 disordered regions span residues 108 to 130 (PSCAPPAPSSTEREQSVRKSSTF) and 271 to 304 (NAQKDSKRIQKEYEDKAGRPSKPPSPKQNVRKNL). Basic and acidic residues predominate over residues 271 to 288 (NAQKDSKRIQKEYEDKAG). At serine 295 the chain carries Phosphoserine. The 211-residue stretch at 401-611 (GIPPSVRGKV…RIWDVFCRDG (211 aa)) folds into the Rab-GAP TBC domain.

Interacts with ULK1. May interact with RAB11A and RAB11B, but does not exhibit any GTPase-activating activity toward these proteins. Interacts with TRAPPC8.

The protein resides in the golgi apparatus. It is found in the cis-Golgi network. It localises to the trans-Golgi network. Functionally, plays a role in the regulation of starvation-induced autophagosome formation. Together with the TRAPPIII complex, regulates a constitutive trafficking step from peripheral recycling endosomes to the early Golgi, maintaining the cycling pool of ATG9 required for initiation of autophagy. The protein is TBC1 domain family member 14 (TBC1D14) of Homo sapiens (Human).